The chain runs to 254 residues: Metallo-beta-lactamase type 2 (254 aa).

Positions methionine 1–alanine 27 are cleaved as a signal peptide. Aspartate 99 provides a ligand contact to Zn(2+). Substrate-binding residues include threonine 135 and histidine 174. Residue cysteine 193 coordinates Zn(2+). Lysine 196 and asparagine 201 together coordinate substrate. Histidine 231 is a Zn(2+) binding site.

This sequence belongs to the metallo-beta-lactamase superfamily. Class-B beta-lactamase family. As to quaternary structure, monomer. Zn(2+) is required as a cofactor.

It is found in the periplasm. The catalysed reaction is a beta-lactam + H2O = a substituted beta-amino acid. Competitively inhibited by mercaptophosphonate and pyridine carboxylate derivatives. Also inhibited by the binding of a second zinc ion and by chelating agents such as EDTA. Confers resistance to the different beta-lactams antibiotics (penicillin, cephalosporin and carbapenem) via the hydrolysis of the beta-lactam ring. It is able to hydrolyze penicillin and imipenem, but is much less active against cephalothin, cefotaxime, meropenem and ceftazidime. The sequence is that of Metallo-beta-lactamase type 2 from Aeromonas hydrophila.